The chain runs to 852 residues: Aconitate hydratase B (852 aa).

Residues R194, 237–239, 405–407, and S489 each bind substrate; these read SSR and QDT. [4Fe-4S] cluster is bound by residues C708, C766, and C769. Substrate is bound by residues R788 and R793.

This sequence belongs to the aconitase/IPM isomerase family. In terms of assembly, monomer. The cofactor is [4Fe-4S] cluster.

It catalyses the reaction citrate = D-threo-isocitrate. The catalysed reaction is (2S,3R)-3-hydroxybutane-1,2,3-tricarboxylate = 2-methyl-cis-aconitate + H2O. Its pathway is carbohydrate metabolism; tricarboxylic acid cycle; isocitrate from oxaloacetate: step 2/2. It participates in organic acid metabolism; propanoate degradation. Functionally, involved in the catabolism of short chain fatty acids (SCFA) via the tricarboxylic acid (TCA)(acetyl degradation route) and probably via the 2-methylcitrate cycle I (propionate degradation route). Catalyzes the reversible isomerization of citrate to isocitrate via cis-aconitate. Catalyzes the hydration of 2-methyl-cis-aconitate to yield (2R,3S)-2-methylisocitrate. The apo form of AcnB functions as a RNA-binding regulatory protein. This Helicobacter pylori (strain J99 / ATCC 700824) (Campylobacter pylori J99) protein is Aconitate hydratase B (acnB).